Reading from the N-terminus, the 533-residue chain is Lysine--tRNA ligase 1 (533 aa).

The short motif at 26 to 34 (PSGHIHIGN) is the 'HIGH' region element. Positions 272 to 276 (AMSSS) match the 'KMSKS' region motif.

Belongs to the class-I aminoacyl-tRNA synthetase family.

Its subcellular location is the cytoplasm. It catalyses the reaction tRNA(Lys) + L-lysine + ATP = L-lysyl-tRNA(Lys) + AMP + diphosphate. The protein is Lysine--tRNA ligase 1 of Methanosarcina acetivorans (strain ATCC 35395 / DSM 2834 / JCM 12185 / C2A).